The following is a 513-amino-acid chain: ATP synthase subunit alpha (513 aa).

Position 169–176 (169–176) interacts with ATP; sequence GDRQTGKT.

This sequence belongs to the ATPase alpha/beta chains family. In terms of assembly, F-type ATPases have 2 components, CF(1) - the catalytic core - and CF(0) - the membrane proton channel. CF(1) has five subunits: alpha(3), beta(3), gamma(1), delta(1), epsilon(1). CF(0) has three main subunits: a(1), b(2) and c(9-12). The alpha and beta chains form an alternating ring which encloses part of the gamma chain. CF(1) is attached to CF(0) by a central stalk formed by the gamma and epsilon chains, while a peripheral stalk is formed by the delta and b chains.

Its subcellular location is the cell inner membrane. The catalysed reaction is ATP + H2O + 4 H(+)(in) = ADP + phosphate + 5 H(+)(out). In terms of biological role, produces ATP from ADP in the presence of a proton gradient across the membrane. The alpha chain is a regulatory subunit. This Thiobacillus denitrificans (strain ATCC 25259 / T1) protein is ATP synthase subunit alpha.